We begin with the raw amino-acid sequence, 526 residues long: GMP synthase [glutamine-hydrolyzing] (526 aa).

The Glutamine amidotransferase type-1 domain occupies 3 to 199; sequence RVAIIDFGSQ…FVRIAGCDNN (197 aa). The active-site Nucleophile is the Cys-83. Active-site residues include His-174 and Glu-176. Residues 200 to 392 form the GMPS ATP-PPase domain; it reads WTVESFLDEQ…LGISDEILMR (193 aa). An ATP-binding site is contributed by 227–233; sequence SGGVDSS.

As to quaternary structure, homodimer.

The enzyme catalyses XMP + L-glutamine + ATP + H2O = GMP + L-glutamate + AMP + diphosphate + 2 H(+). The protein operates within purine metabolism; GMP biosynthesis; GMP from XMP (L-Gln route): step 1/1. Catalyzes the synthesis of GMP from XMP. This is GMP synthase [glutamine-hydrolyzing] from Ehrlichia chaffeensis (strain ATCC CRL-10679 / Arkansas).